Consider the following 144-residue polypeptide: Large ribosomal subunit protein uL15 (144 aa).

Residues Met1 to Ser12 are compositionally biased toward polar residues. Positions Met1–Glu51 are disordered. A compositionally biased stretch (gly residues) spans Arg21–Ala31.

Belongs to the universal ribosomal protein uL15 family. In terms of assembly, part of the 50S ribosomal subunit.

Functionally, binds to the 23S rRNA. The chain is Large ribosomal subunit protein uL15 from Buchnera aphidicola subsp. Schizaphis graminum (strain Sg).